The sequence spans 566 residues: 5'-AMP-activated protein kinase subunit gamma-2 (566 aa).

A disordered region spans residues 1-198 (MGSAAMDTKK…SRIYASSSPP (198 aa)). Low complexity predominate over residues 15-25 (SSPGGSSGKKN). The span at 54–64 (NSEKHSSRKVD) shows a compositional bias: basic and acidic residues. Phosphoserine occurs at positions 65, 71, 73, 90, 138, 143, 158, 161, and 162. Composition is skewed to low complexity over residues 132-144 (KESSPNSNPSTSP) and 156-172 (TSSVSSSPSTPTQVTKQ). The residue at position 165 (Thr165) is a Phosphothreonine. Over residues 180–189 (YKQEPERPES) the composition is skewed to basic and acidic residues. Ser196 carries the phosphoserine modification. 3 CBS domains span residues 272–332 (PTSS…KSPM), 354–412 (TFKP…MSDM), and 427–489 (IGTY…NLDI). Residues Arg299, 314–319 (MLTITD), Val359, 380–381 (HR), and Lys399 contribute to the ADP site. Residues Arg299, 314–319 (MLTITD), Val359, His380, 380–381 (HR), Lys399, Thr429, Ala434, 455–456 (SA), 471–474 (SKFD), Arg498, His527, 527–528 (HR), and 543–546 (SLSD) each bind AMP. Residues Arg299, 314–319 (MLTITD), Val359, 380–381 (HR), Arg381, and Lys399 each bind ATP. The AMPK pseudosubstrate signature appears at 367–388 (LFDAVYSLIKNKIHRLPVIDPI). Residues 471 to 474 (SKFD), Arg498, and 527 to 528 (HR) each bind ADP. Residues 471–474 (SKFD), Arg498, and 527–528 (HR) each bind ATP. Residues 501-559 (YFEGVVKCSKLETLETIVDRIVRAEVHRLVVVNEADSIVGIISLSDILQALILTPAGAK) form the CBS 4 domain.

The protein belongs to the 5'-AMP-activated protein kinase gamma subunit family. As to quaternary structure, AMPK is a heterotrimer of an alpha catalytic subunit (PRKAA1 or PRKAA2), a beta (PRKAB1 or PRKAB2) and a gamma non-catalytic subunits (PRKAG1, PRKAG2 or PRKAG3). Interacts with FNIP1 and FNIP2. Post-translationally, phosphorylated by ULK1; leading to negatively regulate AMPK activity and suggesting the existence of a regulatory feedback loop between ULK1 and AMPK. In terms of processing, glycosylated; O-GlcNAcylated by OGT, promoting the AMP-activated protein kinase (AMPK) activity.

AMP/ATP-binding subunit of AMP-activated protein kinase (AMPK), an energy sensor protein kinase that plays a key role in regulating cellular energy metabolism. In response to reduction of intracellular ATP levels, AMPK activates energy-producing pathways and inhibits energy-consuming processes: inhibits protein, carbohydrate and lipid biosynthesis, as well as cell growth and proliferation. AMPK acts via direct phosphorylation of metabolic enzymes, and by longer-term effects via phosphorylation of transcription regulators. Also acts as a regulator of cellular polarity by remodeling the actin cytoskeleton; probably by indirectly activating myosin. Gamma non-catalytic subunit mediates binding to AMP, ADP and ATP, leading to activate or inhibit AMPK: AMP-binding results in allosteric activation of alpha catalytic subunit (PRKAA1 or PRKAA2) both by inducing phosphorylation and preventing dephosphorylation of catalytic subunits. ADP also stimulates phosphorylation, without stimulating already phosphorylated catalytic subunit. ATP promotes dephosphorylation of catalytic subunit, rendering the AMPK enzyme inactive. In Mus musculus (Mouse), this protein is 5'-AMP-activated protein kinase subunit gamma-2 (Prkag2).